The sequence spans 159 residues: Transcriptional repressor NrdR (159 aa).

A zinc finger lies at 3–34; the sequence is CPFCGAEDTSVVDSRISEEGARIRRRRRCVEC. Positions 49 to 139 constitute an ATP-cone domain; that stretch reads PQVIKQDGNR…VYRSFEDVGD (91 aa).

Belongs to the NrdR family. It depends on Zn(2+) as a cofactor.

Negatively regulates transcription of bacterial ribonucleotide reductase nrd genes and operons by binding to NrdR-boxes. The polypeptide is Transcriptional repressor NrdR (Nitrosomonas europaea (strain ATCC 19718 / CIP 103999 / KCTC 2705 / NBRC 14298)).